The following is a 671-amino-acid chain: DNA ligase (671 aa).

NAD(+)-binding positions include 32–36 (DAEYD), 81–82 (SL), and E113. K115 serves as the catalytic N6-AMP-lysine intermediate. NAD(+)-binding residues include R136, E173, K290, and K314. Zn(2+) is bound by residues C408, C411, C426, and C432. The 79-residue stretch at 593–671 (EIDSPFAGKT…EAEMLRLLGS (79 aa)) folds into the BRCT domain.

Belongs to the NAD-dependent DNA ligase family. LigA subfamily. Mg(2+) is required as a cofactor. It depends on Mn(2+) as a cofactor.

The catalysed reaction is NAD(+) + (deoxyribonucleotide)n-3'-hydroxyl + 5'-phospho-(deoxyribonucleotide)m = (deoxyribonucleotide)n+m + AMP + beta-nicotinamide D-nucleotide.. DNA ligase that catalyzes the formation of phosphodiester linkages between 5'-phosphoryl and 3'-hydroxyl groups in double-stranded DNA using NAD as a coenzyme and as the energy source for the reaction. It is essential for DNA replication and repair of damaged DNA. The polypeptide is DNA ligase (Escherichia coli O7:K1 (strain IAI39 / ExPEC)).